Here is a 23-residue protein sequence, read N- to C-terminus: Aurein-4.2 (23 aa).

Belongs to the frog skin active peptide (FSAP) family. Aurein subfamily. In terms of tissue distribution, expressed by the skin dorsal glands.

The protein localises to the secreted. Its function is as follows. Has no antimicrobial or anticancer activity. The polypeptide is Aurein-4.2 (Ranoidea aurea (Green and golden bell frog)).